Consider the following 203-residue polypeptide: Glycerol-3-phosphate acyltransferase (203 aa).

6 helical membrane passes run 3-23 (ILLA…VVVS), 51-71 (KAAI…VWLV), 74-94 (FGIG…LGHL), 116-136 (AVHP…AFFF), 140-160 (SLAA…LFGT), and 164-178 (PVAW…LLIW).

Belongs to the PlsY family. Probably interacts with PlsX.

It is found in the cell inner membrane. It catalyses the reaction an acyl phosphate + sn-glycerol 3-phosphate = a 1-acyl-sn-glycero-3-phosphate + phosphate. It functions in the pathway lipid metabolism; phospholipid metabolism. Functionally, catalyzes the transfer of an acyl group from acyl-phosphate (acyl-PO(4)) to glycerol-3-phosphate (G3P) to form lysophosphatidic acid (LPA). This enzyme utilizes acyl-phosphate as fatty acyl donor, but not acyl-CoA or acyl-ACP. This is Glycerol-3-phosphate acyltransferase from Burkholderia pseudomallei (strain K96243).